The following is a 159-amino-acid chain: Small ribosomal subunit protein bS6 (159 aa).

Non-standard amino acids (selenocysteine) are located at selenocysteine 46 and selenocysteine 52.

The protein belongs to the bacterial ribosomal protein bS6 family.

Its function is as follows. Binds together with bS18 to 16S ribosomal RNA. This is Small ribosomal subunit protein bS6 from Desulfotalea psychrophila (strain LSv54 / DSM 12343).